The chain runs to 55 residues: Accessory gland-specific peptide 70A (55 aa).

The signal sequence occupies residues methionine 1 to serine 19. Hydroxyproline is present on residues proline 28, proline 32, proline 34, and proline 38. Cysteine 43 and cysteine 55 are disulfide-bonded.

As to expression, main cells of the accessory glands of males (paragonial gland).

It localises to the secreted. Functionally, represses female sexual receptivity and stimulates oviposition. The chain is Accessory gland-specific peptide 70A (Acp70A) from Drosophila sechellia (Fruit fly).